A 119-amino-acid polypeptide reads, in one-letter code: Toxin ICK-8 (119 aa).

The first 19 residues, 1-19 (MMKLYSLVIIATLAAAAFA), serve as a signal peptide directing secretion. Cystine bridges form between C59/C74, C67/C80, C71/C116, and C73/C87.

This sequence belongs to the neurotoxin 25 family. ICK-8 subfamily. Expressed by the venom gland.

The protein resides in the secreted. In terms of biological role, ion channel inhibitor. The sequence is that of Toxin ICK-8 from Trittame loki (Brush-footed trapdoor spider).